Consider the following 76-residue polypeptide: MNTATGFIVLLVLATVLGGIEAGESHMRKDAMGRVRRQYCVPVDQPCSLNTQPCCDDATCTQELNENDNTVYYCRA.

Residues 1–22 (MNTATGFIVLLVLATVLGGIEA) form the signal peptide. A propeptide spanning residues 23-35 (GESHMRKDAMGRV) is cleaved from the precursor. Intrachain disulfides connect Cys40/Cys55, Cys47/Cys60, and Cys54/Cys74.

It belongs to the neurotoxin 08 (Shiva) family. 02 (omega/kappa toxin) subfamily. Expressed by the venom gland.

Its subcellular location is the secreted. Its function is as follows. Toxin that may inhibit ion channels. This chain is Omega/kappa-hexatoxin-Ar1g, found in Atrax robustus (Sydney funnel-web spider).